Here is a 125-residue protein sequence, read N- to C-terminus: Large ribosomal subunit protein bL12 (125 aa).

This sequence belongs to the bacterial ribosomal protein bL12 family. As to quaternary structure, homodimer. Part of the ribosomal stalk of the 50S ribosomal subunit. Forms a multimeric L10(L12)X complex, where L10 forms an elongated spine to which 2 to 4 L12 dimers bind in a sequential fashion. Binds GTP-bound translation factors.

Forms part of the ribosomal stalk which helps the ribosome interact with GTP-bound translation factors. Is thus essential for accurate translation. This Granulibacter bethesdensis (strain ATCC BAA-1260 / CGDNIH1) protein is Large ribosomal subunit protein bL12.